Here is a 506-residue protein sequence, read N- to C-terminus: F-box protein At4g02760 (506 aa).

The 47-residue stretch at 115-161 (TSWPLLPELTIKVFSMLDTKSLMQASACCTMFNKCAMDRVCYSHIDL) folds into the F-box domain. The disordered stretch occupies residues 452-506 (TFVAEFRSPSPSESDVRSPSPSSSSDSSSSSDSSSSSSSGESSDESGTEEEEDED). Residues 459 to 492 (SPSPSESDVRSPSPSSSSDSSSSSDSSSSSSSGE) show a composition bias toward low complexity. The span at 493-506 (SSDESGTEEEEDED) shows a compositional bias: acidic residues.

This chain is F-box protein At4g02760, found in Arabidopsis thaliana (Mouse-ear cress).